Consider the following 493-residue polypeptide: 3-octaprenyl-4-hydroxybenzoate carboxy-lyase (493 aa).

N172 contacts Mn(2+). Prenylated FMN is bound by residues 175–177, 189–191, and 194–195; these read IYR, RWL, and RG. Position 238 (E238) interacts with Mn(2+). Residue D287 is the Proton donor of the active site.

Belongs to the UbiD family. In terms of assembly, homohexamer. Prenylated FMN serves as cofactor. The cofactor is Mn(2+).

The protein resides in the cell membrane. The enzyme catalyses a 4-hydroxy-3-(all-trans-polyprenyl)benzoate + H(+) = a 2-(all-trans-polyprenyl)phenol + CO2. The protein operates within cofactor biosynthesis; ubiquinone biosynthesis. In terms of biological role, catalyzes the decarboxylation of 3-octaprenyl-4-hydroxy benzoate to 2-octaprenylphenol, an intermediate step in ubiquinone biosynthesis. The sequence is that of 3-octaprenyl-4-hydroxybenzoate carboxy-lyase from Shewanella halifaxensis (strain HAW-EB4).